The following is a 485-amino-acid chain: Skb1 localization factor 1 (485 aa).

The segment at 1–200 (MSSIIQNPIE…VDDSDLTPHT (200 aa)) is sufficient for interaction with Skb1. 3 disordered regions span residues 117–230 (NAAN…MSRN), 286–416 (ETQH…LRRS), and 446–466 (TTQE…KPEK). Residues 171–182 (SRSSRYSKTSDL) show a composition bias toward polar residues. A compositionally biased stretch (basic and acidic residues) spans 189-198 (RFVDDSDLTP). Polar residues-rich tracts occupy residues 218 to 230 (GRSS…MSRN) and 341 to 363 (VGSS…QQDS). Residue Ser222 is modified to Phosphoserine. The segment covering 371-393 (SERSYRRVRDQYLSKPRLSDKNR) has biased composition (basic and acidic residues). Residues 394 to 416 (YSTFSEFPGQGTPSASQSNLRRS) show a composition bias toward polar residues. The segment covering 447-464 (TQERKPVVKPDSIKTVKP) has biased composition (basic and acidic residues). Positions 451–485 (KPVVKPDSIKTVKPEKKKSKGFFKKLMHKISHIFD) are required and sufficient for plasma membrane anchoring; lysine-rich, may bind to anionic lipids in the plasma membrane. Phosphoserine is present on Ser458.

As to quaternary structure, interacts with Skb1.

The protein localises to the cell membrane. Functionally, acts as a membrane anchor for Skb1 in forming plasma membrane microdomains. Promotes mitotic entry by sequestering mitotic inhibitor Skb1 from its regulatory targets Cdr1 and Wee1. The protein is Skb1 localization factor 1 of Schizosaccharomyces pombe (strain 972 / ATCC 24843) (Fission yeast).